A 348-amino-acid polypeptide reads, in one-letter code: MLVAPPAFAEAQVLLQRLLNHESLGAVQARALMEQWLSGTLPEALSGALLAALQSKGVSAQELAAMAQVLQEQAVAVEASDRREPLVDTCGTGGDGAETFNISTAVAFVTAAAGVKVAKHGNRSASGRVGSADVLEALGLNLTAPSDRIHAAVDEVGITFLFAPGWHPAMKAVAPLRKILGVRTVFNLLGPLVNPLRPTGQVIGVYNPGLLPTISGALAELGVRRAIVLHGREGLDEGGLADCTDLAIVREGQLSQQVVDPRDLGLTQAPTVALKGGSVEENADILKAVLQGKGTRAQQDAVLLNAALALEVGEQVDRLDQGISLARSVLASGAAWQKLTQLAAFLQS.

5-phospho-alpha-D-ribose 1-diphosphate contacts are provided by residues Gly-91, 94 to 95, Thr-99, 101 to 104, 119 to 127, and Ser-131; these read GD, NIST, and KHGNRSASG. Residue Gly-91 participates in anthranilate binding. Residue Ser-103 participates in Mg(2+) binding. Asn-122 provides a ligand contact to anthranilate. Residue Arg-177 participates in anthranilate binding. Mg(2+)-binding residues include Asp-236 and Glu-237.

The protein belongs to the anthranilate phosphoribosyltransferase family. As to quaternary structure, homodimer. Mg(2+) is required as a cofactor.

The catalysed reaction is N-(5-phospho-beta-D-ribosyl)anthranilate + diphosphate = 5-phospho-alpha-D-ribose 1-diphosphate + anthranilate. It functions in the pathway amino-acid biosynthesis; L-tryptophan biosynthesis; L-tryptophan from chorismate: step 2/5. In terms of biological role, catalyzes the transfer of the phosphoribosyl group of 5-phosphorylribose-1-pyrophosphate (PRPP) to anthranilate to yield N-(5'-phosphoribosyl)-anthranilate (PRA). This Synechococcus elongatus (strain ATCC 33912 / PCC 7942 / FACHB-805) (Anacystis nidulans R2) protein is Anthranilate phosphoribosyltransferase.